We begin with the raw amino-acid sequence, 537 residues long: Phosphoenolpyruvate carboxykinase (ATP) (537 aa).

Substrate is bound by residues Arg64, Tyr204, and Lys210. ATP is bound by residues Lys210, His229, and 245–253 (GLSGTGKTT). Lys210 and His229 together coordinate Mn(2+). Position 266 (Asp266) interacts with Mn(2+). Residues Glu294, Arg330, 446–447 (RI), and Thr452 contribute to the ATP site. Arg330 contacts substrate.

This sequence belongs to the phosphoenolpyruvate carboxykinase (ATP) family. As to quaternary structure, monomer. Mn(2+) serves as cofactor.

The protein resides in the cytoplasm. It carries out the reaction oxaloacetate + ATP = phosphoenolpyruvate + ADP + CO2. It functions in the pathway carbohydrate biosynthesis; gluconeogenesis. In terms of biological role, involved in the gluconeogenesis. Catalyzes the conversion of oxaloacetate (OAA) to phosphoenolpyruvate (PEP) through direct phosphoryl transfer between the nucleoside triphosphate and OAA. The sequence is that of Phosphoenolpyruvate carboxykinase (ATP) from Aliivibrio fischeri (strain ATCC 700601 / ES114) (Vibrio fischeri).